A 758-amino-acid polypeptide reads, in one-letter code: Solute carrier family 26 member 6 (758 aa).

Residues methionine 1 to alanine 117 lie on the Cytoplasmic side of the membrane. The chain crosses the membrane as a helical span at residues glycine 118–phenylalanine 138. Residues glycine 139 to threonine 187 are Extracellular-facing. An N-linked (GlcNAc) asparagine glycan is attached at asparagine 174. Residues leucine 188–valine 208 form a helical membrane-spanning segment. Residues threonine 209 to threonine 263 are Cytoplasmic-facing. Residues valine 264 to leucine 284 form a helical membrane-spanning segment. The Extracellular segment spans residues asparagine 285–leucine 292. The helical transmembrane segment at proline 293–valine 313 threads the bilayer. The Cytoplasmic portion of the chain corresponds to lysine 314–glutamate 340. The helical transmembrane segment at leucine 341 to isoleucine 361 threads the bilayer. Residues serine 362–glutamate 380 lie on the Extracellular side of the membrane. A helical membrane pass occupies residues leucine 381–cysteine 401. The Cytoplasmic portion of the chain corresponds to serine 402 to glutamine 417. Residues valine 418–phenylalanine 438 traverse the membrane as a helical segment. Residues arginine 439–threonine 485 lie on the Extracellular side of the membrane. A helical transmembrane segment spans residues isoleucine 486–valine 506. The Cytoplasmic segment spans residues valine 507 to leucine 758. The region spanning glutamate 531–alanine 741 is the STAS domain. Positions glutamate 585–serine 608 are disordered. The residue at position 751 (serine 751) is a Phosphoserine.

Interacts (via C-terminal domain) with PDZK1 (via C-terminal PDZ domain); the interaction induces chloride and oxalate exchange transport. Interacts with CFTR, SLC26A3 and NHERF1. Interacts with AHCYL1; the interaction increases SLC26A6 activity. N-glycosylated. Glycosylation at Asn-174 positively regulates its chloride oxalate exchanger activity. Expressed in kidney (at protein level). Expressed in spermatogenic cells. Expressed in intestine, kidney, testis, brain, muscle, heart, and stomach. Expressed in the submandibular and sublingual salivary glands. In terms of tissue distribution, highly expressed in stomach, kidney, heart and small intestine, low in the lung, liver, testis, brain, skeletal muscle and colon. As to expression, expressed in the heart.

It localises to the cell membrane. Its subcellular location is the apical cell membrane. It is found in the cytoplasmic vesicle membrane. The protein localises to the microsome. It carries out the reaction 2 hydrogencarbonate(in) + chloride(out) = 2 hydrogencarbonate(out) + chloride(in). The enzyme catalyses oxalate(in) + chloride(out) = oxalate(out) + chloride(in). The catalysed reaction is oxalate(in) + formate(out) = oxalate(out) + formate(in). It catalyses the reaction oxalate(in) + sulfate(out) = oxalate(out) + sulfate(in). It carries out the reaction formate(in) + chloride(out) = formate(out) + chloride(in). The enzyme catalyses sulfate(in) = sulfate(out). Apical membrane chloride-bicarbonate exchange activity of the pancreatic duct is inhibited by 4,4'-diisothiocyanatostilbene-2,2'-disulfonic acid (DIDS). Oxalate secretion in the duodenum and chloride-formate exchange activity is inhibited by DIDS. With respect to regulation, chloride-formate exchange activity and transcellular sulfate absorption is inhibited by 4,4'-diisothiocyanatostilbene-2,2'-disulfonic acid (DIDS). Functionally, apical membrane anion-exchanger with wide epithelial distribution that plays a role as a component of the pH buffering system for maintaining acid-base homeostasis. Acts as a versatile DIDS-sensitive inorganic and organic anion transporter that mediates the uptake of monovalent anions like chloride, bicarbonate, formate and hydroxyl ion and divalent anions like sulfate and oxalate. Functions in multiple exchange modes involving pairs of these anions, which include chloride-bicarbonate, chloride-oxalate, oxalate-formate, oxalate-sulfate and chloride-formate exchange. Apical membrane chloride-bicarbonate exchanger that mediates luminal chloride absorption and bicarbonate secretion by the small intestinal brush border membrane and contributes to intracellular pH regulation in the duodenal upper villous epithelium during proton-coupled peptide absorption, possibly by providing a bicarbonate import pathway. Its association with carbonic anhydrase CA2 forms a bicarbonate transport metabolon; hence maximizes the local concentration of bicarbonate at the transporter site. Also mediates intestinal chloride absorption and oxalate secretion, thereby preventing hyperoxaluria and calcium oxalate urolithiasis. Transepithelial oxalate secretion, chloride-formate, chloride-oxalate and chloride-bicarbonate transport activities in the duodenum are inhibited by PKC activation in a calcium-independent manner. The apical membrane chloride-bicarbonate exchanger also provides a major route for fluid and bicarbonate secretion into the proximal tubules of the kidney as well as into the proximal part of the interlobular pancreatic ductal tree, where it mediates electrogenic chloride-bicarbonate exchange with a chloride-bicarbonate stoichiometry of 1:2, and hence will dilute and alkalinize protein-rich acinar secretion. Also mediates the transcellular sulfate absorption and oxalate secretion across the apical membrane in the duodenum and the formate ion efflux at the apical brush border of cells in the proximal tubules of kidney. Plays a role in sperm capacitation by increasing intracellular pH. Mediates electrogenic chloride-bicarbonate exchange with a chloride-bicarbonate stoichiometry of 1:2. Also mediates exchange of chloride-formate and chloride-oxalate ions. Mediates transcellular sulfate absorption. The protein is Solute carrier family 26 member 6 of Mus musculus (Mouse).